The chain runs to 370 residues: ADP-ribosylhydrolase ARH3 (370 aa).

Residue glutamate 47 coordinates Mg(2+). Threonine 70 carries the phosphothreonine modification. Threonine 82, aspartate 83, and aspartate 84 together coordinate Mg(2+). Residue aspartate 83 participates in substrate binding. Substrate contacts are provided by residues 152-158 (KGSYGNG), histidine 188, leucine 241, and isoleucine 277. Aspartate 320, aspartate 322, and threonine 323 together coordinate Mg(2+).

The protein belongs to the ADP-ribosylglycohydrolase family. As to quaternary structure, monomer. Requires Mg(2+) as cofactor. Ubiquitous.

The protein localises to the nucleus. It localises to the cytoplasm. It is found in the chromosome. The protein resides in the mitochondrion matrix. The catalysed reaction is [(1''-&gt;2')-ADP-alpha-D-ribose](n) + H2O = [(1''-&gt;2')-ADP-alpha-D-ribose](n-1) + ADP-D-ribose. The enzyme catalyses 1''-O-acetyl-ADP-alpha-D-ribose + H2O = ADP-D-ribose + acetate + H(+). It catalyses the reaction O-(ADP-D-ribosyl)-L-seryl-[protein] + H2O = ADP-D-ribose + L-seryl-[protein]. It carries out the reaction alpha-NAD(+) + H2O = ADP-D-ribose + nicotinamide + H(+). With respect to regulation, the protein undergoes a dramatic conformational switch from closed to open states upon substrate-binding, which enables specific substrate recognition for the 1''-O-linkage. The glutamate flap (Glu-47) blocks substrate entrance to Mg(2+) in the unliganded closed state. In presence of substrate, Glu-47 is ejected from the active site: this closed-to-open transition significantly widens the substrate-binding channel and precisely positions the scissile 1''-O-linkage for cleavage while securing tightly 2'- and 3'-hydroxyls of ADP-ribose. ADP-ribosylhydrolase that preferentially hydrolyzes the scissile alpha-O-linkage attached to the anomeric C1'' position of ADP-ribose and acts on different substrates, such as proteins ADP-ribosylated on serine and threonine, free poly(ADP-ribose) and O-acetyl-ADP-D-ribose. Specifically acts as a serine mono-ADP-ribosylhydrolase by mediating the removal of mono-ADP-ribose attached to serine residues on proteins, thereby playing a key role in DNA damage response. Serine ADP-ribosylation of proteins constitutes the primary form of ADP-ribosylation of proteins in response to DNA damage. Does not hydrolyze ADP-ribosyl-arginine, -cysteine, -diphthamide, or -asparagine bonds. Also able to degrade protein free poly(ADP-ribose), which is synthesized in response to DNA damage: free poly(ADP-ribose) acts as a potent cell death signal and its degradation by ADPRHL2 protects cells from poly(ADP-ribose)-dependent cell death, a process named parthanatos. Also hydrolyzes free poly(ADP-ribose) in mitochondria. Specifically digests O-acetyl-ADP-D-ribose, a product of deacetylation reactions catalyzed by sirtuins. Specifically degrades 1''-O-acetyl-ADP-D-ribose isomer, rather than 2''-O-acetyl-ADP-D-ribose or 3''-O-acetyl-ADP-D-ribose isomers. This chain is ADP-ribosylhydrolase ARH3 (Adprs), found in Mus musculus (Mouse).